The following is a 389-amino-acid chain: Putative cyclin-F3-1 (389 aa).

The segment at 1–103 (MEAAAAAAAE…GAAGGSRQPV (103 aa)) is disordered. Over residues 19–43 (VEGAAVAAVAPEAAAEGPSEPNAGE) the composition is skewed to low complexity.

Belongs to the cyclin family. Cyclin F subfamily.

This is Putative cyclin-F3-1 (CYCF3-1) from Oryza sativa subsp. japonica (Rice).